The sequence spans 83 residues: Cytochrome b559 subunit alpha (83 aa).

Residues 21-35 (VIHSITIPSLFIAGW) traverse the membrane as a helical segment. His23 lines the heme pocket.

This sequence belongs to the PsbE/PsbF family. Heterodimer of an alpha subunit and a beta subunit. PSII is composed of 1 copy each of membrane proteins PsbA, PsbB, PsbC, PsbD, PsbE, PsbF, PsbH, PsbI, PsbJ, PsbK, PsbL, PsbM, PsbT, PsbX, PsbY, PsbZ, Psb30/Ycf12, at least 3 peripheral proteins of the oxygen-evolving complex and a large number of cofactors. It forms dimeric complexes. The cofactor is heme b.

Its subcellular location is the plastid. The protein localises to the chloroplast thylakoid membrane. Functionally, this b-type cytochrome is tightly associated with the reaction center of photosystem II (PSII). PSII is a light-driven water:plastoquinone oxidoreductase that uses light energy to abstract electrons from H(2)O, generating O(2) and a proton gradient subsequently used for ATP formation. It consists of a core antenna complex that captures photons, and an electron transfer chain that converts photonic excitation into a charge separation. The protein is Cytochrome b559 subunit alpha of Huperzia lucidula (Shining clubmoss).